A 135-amino-acid chain; its full sequence is Large ribosomal subunit protein uL16c (135 aa).

The protein belongs to the universal ribosomal protein uL16 family. Part of the 50S ribosomal subunit.

It localises to the plastid. The protein localises to the chloroplast. The protein is Large ribosomal subunit protein uL16c of Lactuca sativa (Garden lettuce).